The sequence spans 221 residues: U1 small nuclear ribonucleoprotein C (221 aa).

Residues 4–36 form a Matrin-type zinc finger; that stretch reads HYCDYCDVFLTHDSVSVRKAHNSGRNHLQNVRE. Residues 80–221 are disordered; it reads GAGPLSGSSD…PHSRTGYGPR (142 aa). Over residues 142 to 158 the composition is skewed to pro residues; the sequence is YSRPPPQGGPYSRPPPD. A compositionally biased stretch (low complexity) spans 178 to 190; that stretch reads PLGYGAPLPGAYP. Residues 191-204 show a composition bias toward pro residues; that stretch reads SGPPPNMRGPPPPL.

This sequence belongs to the U1 small nuclear ribonucleoprotein C family. U1 snRNP is composed of the 7 core Sm proteins B/B', D1, D2, D3, E, F and G that assemble in a heptameric protein ring on the Sm site of the small nuclear RNA to form the core snRNP, and at least 3 U1 snRNP-specific proteins U1-70K, U1-A and U1-C. U1-C interacts with U1 snRNA and the 5' splice-site region of the pre-mRNA.

Its subcellular location is the nucleus. In terms of biological role, component of the spliceosomal U1 snRNP, which is essential for recognition of the pre-mRNA 5' splice-site and the subsequent assembly of the spliceosome. U1-C is directly involved in initial 5' splice-site recognition for both constitutive and regulated alternative splicing. The interaction with the 5' splice-site seems to precede base-pairing between the pre-mRNA and the U1 snRNA. Stimulates commitment or early (E) complex formation by stabilizing the base pairing of the 5' end of the U1 snRNA and the 5' splice-site region. In Mycosarcoma maydis (Corn smut fungus), this protein is U1 small nuclear ribonucleoprotein C.